A 100-amino-acid chain; its full sequence is Urease subunit gamma (100 aa).

It belongs to the urease gamma subunit family. As to quaternary structure, heterotrimer of UreA (gamma), UreB (beta) and UreC (alpha) subunits. Three heterotrimers associate to form the active enzyme.

The protein localises to the cytoplasm. The enzyme catalyses urea + 2 H2O + H(+) = hydrogencarbonate + 2 NH4(+). It functions in the pathway nitrogen metabolism; urea degradation; CO(2) and NH(3) from urea (urease route): step 1/1. The protein is Urease subunit gamma of Prochlorococcus marinus (strain MIT 9313).